The following is a 109-amino-acid chain: Putative pterin-4-alpha-carbinolamine dehydratase (109 aa).

This sequence belongs to the pterin-4-alpha-carbinolamine dehydratase family.

The enzyme catalyses (4aS,6R)-4a-hydroxy-L-erythro-5,6,7,8-tetrahydrobiopterin = (6R)-L-erythro-6,7-dihydrobiopterin + H2O. This Rickettsia canadensis (strain McKiel) protein is Putative pterin-4-alpha-carbinolamine dehydratase.